The primary structure comprises 397 residues: 2,3,4,5-tetrahydropyridine-2,6-dicarboxylate N-succinyltransferase (397 aa).

E265 acts as the Acyl-anhydride intermediate in catalysis. Succinyl-CoA-binding positions include R267, G282, S285, A308, 323–324 (DA), G331, K360, and 373–376 (RQNS).

It belongs to the type 2 tetrahydrodipicolinate N-succinyltransferase family. In terms of assembly, homotrimer.

It localises to the cytoplasm. It carries out the reaction (S)-2,3,4,5-tetrahydrodipicolinate + succinyl-CoA + H2O = (S)-2-succinylamino-6-oxoheptanedioate + CoA. It participates in amino-acid biosynthesis; L-lysine biosynthesis via DAP pathway; LL-2,6-diaminopimelate from (S)-tetrahydrodipicolinate (succinylase route): step 1/3. In terms of biological role, catalyzes the conversion of the cyclic tetrahydrodipicolinate (THDP) into the acyclic N-succinyl-L-2-amino-6-oxopimelate using succinyl-CoA. In Sulfurovum sp. (strain NBC37-1), this protein is 2,3,4,5-tetrahydropyridine-2,6-dicarboxylate N-succinyltransferase.